The primary structure comprises 156 residues: Small ribosomal subunit protein uS7 (156 aa).

It belongs to the universal ribosomal protein uS7 family. As to quaternary structure, part of the 30S ribosomal subunit. Contacts proteins S9 and S11.

In terms of biological role, one of the primary rRNA binding proteins, it binds directly to 16S rRNA where it nucleates assembly of the head domain of the 30S subunit. Is located at the subunit interface close to the decoding center, probably blocks exit of the E-site tRNA. The chain is Small ribosomal subunit protein uS7 from Rhizorhabdus wittichii (strain DSM 6014 / CCUG 31198 / JCM 15750 / NBRC 105917 / EY 4224 / RW1) (Sphingomonas wittichii).